Here is a 613-residue protein sequence, read N- to C-terminus: MPDYRSKTSTHGRNMAGARALWRATGMKDDDFKKPIIAIANSFTQFVPGHVHLKDLGQLVAREIERAGGVAKEFNTIAVDDGIAMGHDGMLYSLPSREIIADSVEYMVNAHCADAIVCISNCDKITPGMLMAALRLNIPVIFVSGGPMEAGKTKLASHGLDLVDAMVIAADSSASDEKVAEYERSACPTCGSCSGMFTANSMNCLTEALGLALPGNGSTLATHSDREELFLRAGRTIVELCQRYYGDNDESVLPRNIANFKAFENAMTLDIAMGGSTNTILHLLAAAQEAEIDFDLRDIDRLSRHVPQLCKVAPNIQKYHMEDVHRAGGIFSILGELARGGLLHTDLPTVHSKTMAEGIAQWDITQTSDEAVHHFFKAGPAGIPTQTAFSQSTRWDSLDDDRENGCIRSVEHAYSKEGGLAVLYGNIALDGCVVKTAGVDESIHVFEGNAKIFESQDSAVRGILADEVKEGDIVIIRYEGPKGGPGMQEMLYPTSYLKSKGLGKACALLTDGRFSGGTSGLSIGHASPEAAAGGTIGLVQDGDKVLIDIPNRSINLLVSDEELAARRVEQDKKGWKPVEARPRKVTTALKAYALLATSADKGAVRNKAMLDGL.

Asp-81 is a Mg(2+) binding site. Residue Cys-122 coordinates [2Fe-2S] cluster. 2 residues coordinate Mg(2+): Asp-123 and Lys-124. The residue at position 124 (Lys-124) is an N6-carboxylysine. Position 193 (Cys-193) interacts with [2Fe-2S] cluster. A Mg(2+)-binding site is contributed by Glu-489. Ser-515 (proton acceptor) is an active-site residue.

Belongs to the IlvD/Edd family. Homodimer. It depends on [2Fe-2S] cluster as a cofactor. Mg(2+) is required as a cofactor.

The catalysed reaction is (2R)-2,3-dihydroxy-3-methylbutanoate = 3-methyl-2-oxobutanoate + H2O. It catalyses the reaction (2R,3R)-2,3-dihydroxy-3-methylpentanoate = (S)-3-methyl-2-oxopentanoate + H2O. It functions in the pathway amino-acid biosynthesis; L-isoleucine biosynthesis; L-isoleucine from 2-oxobutanoate: step 3/4. Its pathway is amino-acid biosynthesis; L-valine biosynthesis; L-valine from pyruvate: step 3/4. Functions in the biosynthesis of branched-chain amino acids. Catalyzes the dehydration of (2R,3R)-2,3-dihydroxy-3-methylpentanoate (2,3-dihydroxy-3-methylvalerate) into 2-oxo-3-methylpentanoate (2-oxo-3-methylvalerate) and of (2R)-2,3-dihydroxy-3-methylbutanoate (2,3-dihydroxyisovalerate) into 2-oxo-3-methylbutanoate (2-oxoisovalerate), the penultimate precursor to L-isoleucine and L-valine, respectively. The polypeptide is Dihydroxy-acid dehydratase (Pseudomonas fluorescens (strain ATCC BAA-477 / NRRL B-23932 / Pf-5)).